Here is a 98-residue protein sequence, read N- to C-terminus: ATP synthase subunit alpha, chloroplastic (98 aa).

It belongs to the ATPase alpha/beta chains family. F-type ATPases have 2 components, CF(1) - the catalytic core - and CF(0) - the membrane proton channel. CF(1) has five subunits: alpha(3), beta(3), gamma(1), delta(1), epsilon(1). CF(0) has four main subunits: a, b, b' and c.

The protein localises to the plastid. The protein resides in the chloroplast thylakoid membrane. The enzyme catalyses ATP + H2O + 4 H(+)(in) = ADP + phosphate + 5 H(+)(out). Its function is as follows. Produces ATP from ADP in the presence of a proton gradient across the membrane. The alpha chain is a regulatory subunit. The polypeptide is ATP synthase subunit alpha, chloroplastic (atpA) (Populus euphratica (Euphrates poplar)).